The chain runs to 573 residues: Exonuclease V, mitochondrial (573 aa).

4 residues coordinate [4Fe-4S] cluster: cysteine 90, cysteine 538, cysteine 541, and cysteine 547.

Belongs to the EXO5 family. Monomer. Mg(2+) serves as cofactor. The cofactor is [4Fe-4S] cluster.

Its subcellular location is the mitochondrion. Its function is as follows. Single strand DNA specific 5' exonuclease involved in mitochondrial DNA replication and recombination. Releases dinucleotides as main products of catalysis. Has the capacity to slide across 5'double-stranded DNA or 5'RNA sequences and resumes cutting two nucleotides downstream of the double-stranded-to-single-stranded junction or RNA-to-DNA junction, respectively. The sequence is that of Exonuclease V, mitochondrial (EXO5) from Scheffersomyces stipitis (strain ATCC 58785 / CBS 6054 / NBRC 10063 / NRRL Y-11545) (Yeast).